We begin with the raw amino-acid sequence, 659 residues long: Putative cysteine-rich receptor-like protein kinase 39 (659 aa).

Residues 1–27 (MGKYSVLMIFIASSLLIVLQNVEIVNA) form the signal peptide. 2 consecutive Gnk2-homologous domains span residues 28 to 134 (VGCT…NHST) and 142 to 253 (PSVR…LYAF). The Extracellular segment spans residues 28-289 (VGCTGSFFNG…KKKGRSIGYG (262 aa)). 8 N-linked (GlcNAc...) asparagine glycosylation sites follow: Asn-38, Asn-64, Asn-122, Asn-131, Asn-157, Asn-170, Asn-259, and Asn-274. Residues 290–310 (GIIAIVVVLTFINILVFIGYI) form a helical membrane-spanning segment. The Cytoplasmic segment spans residues 311–659 (KVYGRRKESY…DDVFTELSCR (349 aa)). The Protein kinase domain maps to 353–619 (FSSENTLGQG…PTMSSVIIWL (267 aa)). ATP-binding positions include 359-367 (LGQGGFGTV) and Lys-381. Tyr-426 is subject to Phosphotyrosine. Catalysis depends on Asp-478, which acts as the Proton acceptor. Ser-482 is subject to Phosphoserine. Thr-518 is subject to Phosphothreonine. Residue Tyr-526 is modified to Phosphotyrosine.

The protein belongs to the protein kinase superfamily. Ser/Thr protein kinase family. CRK subfamily.

It is found in the membrane. It catalyses the reaction L-seryl-[protein] + ATP = O-phospho-L-seryl-[protein] + ADP + H(+). The catalysed reaction is L-threonyl-[protein] + ATP = O-phospho-L-threonyl-[protein] + ADP + H(+). The protein is Putative cysteine-rich receptor-like protein kinase 39 (CRK39) of Arabidopsis thaliana (Mouse-ear cress).